A 433-amino-acid polypeptide reads, in one-letter code: Trigger factor (433 aa).

The PPIase FKBP-type domain maps to 161-246; that stretch reads EDRVVIDFVG…LKKVENIVLP (86 aa).

This sequence belongs to the FKBP-type PPIase family. Tig subfamily.

Its subcellular location is the cytoplasm. It catalyses the reaction [protein]-peptidylproline (omega=180) = [protein]-peptidylproline (omega=0). In terms of biological role, involved in protein export. Acts as a chaperone by maintaining the newly synthesized protein in an open conformation. Functions as a peptidyl-prolyl cis-trans isomerase. This Actinobacillus pleuropneumoniae serotype 7 (strain AP76) protein is Trigger factor.